The chain runs to 386 residues: Succinate--CoA ligase [ADP-forming] subunit beta (386 aa).

In terms of domain architecture, ATP-grasp spans 9–244 (KDILRQFGVP…LDEEDPAEVE (236 aa)). Residues Lys-46, 53–55 (GRG), Glu-99, Ala-102, and Glu-107 each bind ATP. Mg(2+)-binding residues include Asn-199 and Asp-213. Substrate-binding positions include Asn-264 and 321 to 323 (GIM).

Belongs to the succinate/malate CoA ligase beta subunit family. As to quaternary structure, heterotetramer of two alpha and two beta subunits. Mg(2+) is required as a cofactor.

It catalyses the reaction succinate + ATP + CoA = succinyl-CoA + ADP + phosphate. The catalysed reaction is GTP + succinate + CoA = succinyl-CoA + GDP + phosphate. Its pathway is carbohydrate metabolism; tricarboxylic acid cycle; succinate from succinyl-CoA (ligase route): step 1/1. Functionally, succinyl-CoA synthetase functions in the citric acid cycle (TCA), coupling the hydrolysis of succinyl-CoA to the synthesis of either ATP or GTP and thus represents the only step of substrate-level phosphorylation in the TCA. The beta subunit provides nucleotide specificity of the enzyme and binds the substrate succinate, while the binding sites for coenzyme A and phosphate are found in the alpha subunit. In Delftia acidovorans (strain DSM 14801 / SPH-1), this protein is Succinate--CoA ligase [ADP-forming] subunit beta.